The primary structure comprises 684 residues: Beta-mannosyltransferase 1 (684 aa).

At 1–28 (MDKFIQSFSHQYLDSSSSLKLTARRKRK) the chain is on the cytoplasmic side. Residues 29–49 (LTILGLFLFSLISLMIIISYS) form a helical membrane-spanning segment. Residues 50 to 684 (NNNILPGLSG…KFCKIYGETF (635 aa)) are Extracellular-facing. N-linked (GlcNAc...) asparagine glycosylation is present at asparagine 297.

This sequence belongs to the BMT family.

Its subcellular location is the membrane. Its function is as follows. Beta-mannosyltransferase involved in cell wall biosynthesis. Required for addition of the first beta-mannose residue to acid-stable fraction of cell wall phosphopeptidomannan. Plays a key role in reducing host inflammatory response. The polypeptide is Beta-mannosyltransferase 1 (BMT1) (Candida albicans (strain SC5314 / ATCC MYA-2876) (Yeast)).